A 1050-amino-acid chain; its full sequence is Beta-galactosidase (1050 aa).

Positions 110 and 209 each coordinate substrate. Asp209 is a Na(+) binding site. Positions 432, 434, and 477 each coordinate Mg(2+). Substrate is bound by residues Glu477 and Glu553 to His556. Glu477 serves as the catalytic Proton donor. The Nucleophile role is filled by Glu553. Asn613 serves as a coordination point for Mg(2+). Na(+) contacts are provided by Phe617 and Asn620. Substrate-binding residues include Asn620 and Trp1023.

The protein belongs to the glycosyl hydrolase 2 family. As to quaternary structure, homotetramer. Mg(2+) is required as a cofactor. Requires Na(+) as cofactor.

The enzyme catalyses Hydrolysis of terminal non-reducing beta-D-galactose residues in beta-D-galactosides.. The protein is Beta-galactosidase of Yersinia enterocolitica serotype O:8 / biotype 1B (strain NCTC 13174 / 8081).